Here is a 293-residue protein sequence, read N- to C-terminus: Proline iminopeptidase (293 aa).

The active-site Nucleophile is the S105. Residue D244 is part of the active site. H271 acts as the Proton donor in catalysis.

This sequence belongs to the peptidase S33 family. Part of the tricorn proteolytic complex.

The enzyme catalyses Release of N-terminal proline from a peptide.. Cleaves H-Pro-AMC as well as a wide spectrum of amino acid substrates and several peptide substrates without a proline at the N-terminus. Proteases F1, F2 and F3 degrade oligopeptides produced by Tricorn (themselves probably produced by the proteasome) yielding free amino acids. This Thermoplasma acidophilum (strain ATCC 25905 / DSM 1728 / JCM 9062 / NBRC 15155 / AMRC-C165) protein is Proline iminopeptidase (pip).